Here is a 204-residue protein sequence, read N- to C-terminus: uncharacterized protein (204 aa).

This is an uncharacterized protein from Acinetobacter calcoaceticus.